The following is a 526-amino-acid chain: Maturase K (526 aa).

It belongs to the intron maturase 2 family. MatK subfamily.

It localises to the plastid. Its subcellular location is the chloroplast. Its function is as follows. Usually encoded in the trnK tRNA gene intron. Probably assists in splicing its own and other chloroplast group II introns. The protein is Maturase K of Iris pseudacorus (Yellow flag).